A 211-amino-acid chain; its full sequence is tRNA (guanine-N(7)-)-methyltransferase (211 aa).

Residues Glu-44, Asp-69, Asp-96, and Asp-118 each contribute to the S-adenosyl-L-methionine site. Asp-118 is an active-site residue. Substrate is bound at residue Lys-122. The segment at 124-129 (RHEKRR) is interaction with RNA. Residues Asp-154 and 191–194 (TEYE) each bind substrate.

The protein belongs to the class I-like SAM-binding methyltransferase superfamily. TrmB family.

The catalysed reaction is guanosine(46) in tRNA + S-adenosyl-L-methionine = N(7)-methylguanosine(46) in tRNA + S-adenosyl-L-homocysteine. Its pathway is tRNA modification; N(7)-methylguanine-tRNA biosynthesis. Catalyzes the formation of N(7)-methylguanine at position 46 (m7G46) in tRNA. This is tRNA (guanine-N(7)-)-methyltransferase from Streptococcus mutans serotype c (strain ATCC 700610 / UA159).